The chain runs to 412 residues: Poly-beta-1,6-N-acetyl-D-glucosamine synthase (412 aa).

4 helical membrane-spanning segments follow: residues 6–28 (FLLF…FYFT), 290–312 (LYIL…LYLG), 332–354 (IFLL…ALFI), and 366–388 (LIFV…LVAF).

It belongs to the glycosyltransferase 2 family.

Its subcellular location is the cell membrane. Its function is as follows. N-acetylglucosaminyltransferase that catalyzes the polymerization of single monomer units of UDP-N-acetylglucosamine to produce the linear homomer poly-beta-1,6-N-acetyl-D-glucosamine (PNAG, also referred to as PIA), a biofilm adhesin polysaccharide. Requires IcaD for full activity. In Staphylococcus aureus (strain MSSA476), this protein is Poly-beta-1,6-N-acetyl-D-glucosamine synthase (icaA).